We begin with the raw amino-acid sequence, 92 residues long: Probable Fe(2+)-trafficking protein (92 aa).

It belongs to the Fe(2+)-trafficking protein family.

Its function is as follows. Could be a mediator in iron transactions between iron acquisition and iron-requiring processes, such as synthesis and/or repair of Fe-S clusters in biosynthetic enzymes. The protein is Probable Fe(2+)-trafficking protein of Anaeromyxobacter sp. (strain Fw109-5).